The primary structure comprises 94 residues: Small ribosomal subunit protein uS19 (94 aa).

Belongs to the universal ribosomal protein uS19 family.

In terms of biological role, protein S19 forms a complex with S13 that binds strongly to the 16S ribosomal RNA. This is Small ribosomal subunit protein uS19 from Wolbachia pipientis subsp. Culex pipiens (strain wPip).